The chain runs to 380 residues: MKSVGLITEYNPFHNGHLYHAQQSKLQSDAEISIAIMSGNFVMRGEPAIYNKFLRTKMALSGVDLVVELPAIASLSSSDYFATFAIKVAHYLDIDTIAFGSEINDISRLENVASNINSLEQSSYFQDLIKQGNSYAKIVHDLIDDQQVLRSPNNILGVAYIKAISNIAPTIKRIAIQRQSTAHHDQEIKHDNFASGSAIRHALLNKENTWKDVVPADIKHLYETPHLLKKQTFNFIKYNILSRSSEELSHIYTMSEGFEHRLKSNIQNAQDFDTYMSLIKTKRFTYTHIQRVLMQILLNINKSDFDDEIRGVRILGMNQRGQQYLKYLKKQFPNRLYVTNINKESASLLKNEIKATHIYNLISGQRANDFNTPVIINKKN.

ATP is bound by residues 7-20 (ITEY…HLYH), glycine 100, asparagine 153, and arginine 178.

The protein belongs to the TmcAL family.

The protein localises to the cytoplasm. The enzyme catalyses cytidine(34) in elongator tRNA(Met) + acetate + ATP = N(4)-acetylcytidine(34) in elongator tRNA(Met) + AMP + diphosphate. Its function is as follows. Catalyzes the formation of N(4)-acetylcytidine (ac(4)C) at the wobble position of elongator tRNA(Met), using acetate and ATP as substrates. First activates an acetate ion to form acetyladenylate (Ac-AMP) and then transfers the acetyl group to tRNA to form ac(4)C34. The chain is tRNA(Met) cytidine acetate ligase from Staphylococcus haemolyticus (strain JCSC1435).